Reading from the N-terminus, the 516-residue chain is Acyl-lipid (7-3)-desaturase, chloroplastic (516 aa).

Residues 1-25 (MNATMQRSAVAGRTSGKVATTARAS) form a disordered region. A chloroplast-targeting transit peptide spans 1 to 47 (MNATMQRSAVAGRTSGKVATTARASSMARPRLPIAGRVARRSAVTVR). Positions 83–148 (WTVYRGVAYD…LADFPVDAVP (66 aa)) constitute a Cytochrome b5 heme-binding domain. 2 residues coordinate heme: H100 and H123. 2 helical membrane passes run 186-206 (GAAF…TYDA) and 209-229 (LTGA…QHCG). The short motif at 227-231 (HCGNH) is the Histidine box-1 element. Residues 262–267 (HQVSHH) carry the Histidine box-2 motif. Transmembrane regions (helical) follow at residues 305–325 (MWAL…QALL), 354–374 (FLLY…GGAA), 375–395 (GYLF…HNVP), and 423–443 (VLTS…GLNL). The short motif at 444–448 (QIEHH) is the Histidine box-3 element.

The protein belongs to the fatty acid desaturase type 1 family. Fe(2+) serves as cofactor.

It localises to the plastid. The protein resides in the chloroplast membrane. It carries out the reaction a (7Z,10Z,13Z,16Z,19Z)-docosapentaenoyl-containing glycerolipid + 2 Fe(II)-[cytochrome b5] + O2 + 2 H(+) = a (4Z,7Z,10Z,13Z,16Z,19Z)-docosahexaenoyl-containing glycerolipid + 2 Fe(III)-[cytochrome b5] + 2 H2O. It catalyses the reaction a (7Z,10Z,13Z,16Z)-docosatetraenoyl-containing glycerolipid + 2 Fe(II)-[cytochrome b5] + O2 + 2 H(+) = a (4Z,7Z,10Z,13Z,16Z)-docosapentaenoyl-containing glycerolipid + 2 Fe(III)-[cytochrome b5] + 2 H2O. Fatty acid desaturase that introduces a cis double bond at the 4-position in 16-carbon polyunsaturated fatty acids that contain a Delta(7) double bond, resulting in the production of 16 carbon fatty acid (7Z,10Z,13Z)-hexadeca-7,10,13-trienoate. The polypeptide is Acyl-lipid (7-3)-desaturase, chloroplastic (Chlamydomonas reinhardtii (Chlamydomonas smithii)).